Here is a 255-residue protein sequence, read N- to C-terminus: Fumarate reductase cytochrome b subunit (255 aa).

5 consecutive transmembrane segments (helical) span residues 33–53 (TGLI…SILI), 78–98 (IVSV…FLAL), 126–146 (WFIQ…HLFV), 168–188 (FWLL…IGLY), and 208–228 (VKWA…GAYI). The heme b site is built by H44, H93, H143, and H182.

It belongs to the diheme cytochrome b FrdC family. Part of an enzyme complex containing three subunits: a flavoprotein (frdA), an iron-sulfur protein (frdB), and diheme cytochrome b (frdC). Heme b serves as cofactor.

The protein localises to the cell inner membrane. The fumarate reductase enzyme complex is required for fumarate respiration. This subunit anchors the complex in the membrane and binds a diheme cytochrome b. This chain is Fumarate reductase cytochrome b subunit (frdC), found in Helicobacter pylori (strain ATCC 700392 / 26695) (Campylobacter pylori).